Here is a 103-residue protein sequence, read N- to C-terminus: Protein Rev (103 aa).

Ser5 carries the phosphoserine; by host CK2 modification. Positions 17–25 are homomultimerization; the sequence is IIKILYQSN. Disordered regions lie at residues 24–49 and 82–103; these read SNPC…RRQA and IRDP…TKDN. A Nuclear localization signal and RNA-binding (RRE) motif is present at residues 33–49; that stretch reads SRNARKNRRRRWRRRQA. Residues 35-48 are compositionally biased toward basic residues; the sequence is NARKNRRRRWRRRQ. Positions 72-83 match the Nuclear export signal and binding to XPO1 motif; that stretch reads VDLPPLEQLNIR.

This sequence belongs to the HIV-1 REV protein family. As to quaternary structure, homomultimer; when bound to the RRE. Multimeric assembly is essential for activity and may involve XPO1. Binds to human KPNB1, XPO1, TNPO1, RANBP5 and IPO7. Interacts with the viral Integrase. Interacts with human KHDRBS1. Interacts with human NAP1; this interaction decreases Rev multimerization and stimulates its activity. Interacts with human DEAD-box helicases DDX3 and DDX24; these interactions may serve for viral RNA export to the cytoplasm and packaging, respectively. Interacts with human PSIP1; this interaction may inhibit HIV-1 DNA integration by promoting dissociation of the Integrase-LEDGF/p75 complex. In terms of processing, asymmetrically arginine dimethylated at one site by host PRMT6. Methylation impairs the RNA-binding activity and export of viral RNA from the nucleus to the cytoplasm. Post-translationally, phosphorylated by protein kinase CK2. Presence of, and maybe binding to the N-terminus of the regulatory beta subunit of CK2 is necessary for CK2-mediated Rev's phosphorylation.

It is found in the host nucleus. The protein resides in the host nucleolus. It localises to the host cytoplasm. Escorts unspliced or incompletely spliced viral pre-mRNAs (late transcripts) out of the nucleus of infected cells. These pre-mRNAs carry a recognition sequence called Rev responsive element (RRE) located in the env gene, that is not present in fully spliced viral mRNAs (early transcripts). This function is essential since most viral proteins are translated from unspliced or partially spliced pre-mRNAs which cannot exit the nucleus by the pathway used by fully processed cellular mRNAs. Rev itself is translated from a fully spliced mRNA that readily exits the nucleus. Rev's nuclear localization signal (NLS) binds directly to KPNB1/Importin beta-1 without previous binding to KPNA1/Importin alpha-1. KPNB1 binds to the GDP bound form of RAN (Ran-GDP) and targets Rev to the nucleus. In the nucleus, the conversion from Ran-GDP to Ran-GTP dissociates Rev from KPNB1 and allows Rev's binding to the RRE in viral pre-mRNAs. Rev multimerization on the RRE via cooperative assembly exposes its nuclear export signal (NES) to the surface. Rev can then form a complex with XPO1/CRM1 and Ran-GTP, leading to nuclear export of the complex. Conversion from Ran-GTP to Ran-GDP mediates dissociation of the Rev/RRE/XPO1/RAN complex, so that Rev can return to the nucleus for a subsequent round of export. Beside KPNB1, also seems to interact with TNPO1/Transportin-1, RANBP5/IPO5 and IPO7/RANBP7 for nuclear import. The nucleoporin-like HRB/RIP is an essential cofactor that probably indirectly interacts with Rev to release HIV RNAs from the perinuclear region to the cytoplasm. The protein is Protein Rev of Human immunodeficiency virus type 1 group O (isolate MVP5180) (HIV-1).